The chain runs to 548 residues: Chaperonin GroEL (548 aa).

ATP-binding positions include 29 to 32 (THGP), Lys50, 86 to 90 (DGTTT), Gly414, and Asp493.

Belongs to the chaperonin (HSP60) family. As to quaternary structure, forms a cylinder of 14 subunits composed of two heptameric rings stacked back-to-back. Interacts with the co-chaperonin GroES.

The protein resides in the cytoplasm. The catalysed reaction is ATP + H2O + a folded polypeptide = ADP + phosphate + an unfolded polypeptide.. Its function is as follows. Together with its co-chaperonin GroES, plays an essential role in assisting protein folding. The GroEL-GroES system forms a nano-cage that allows encapsulation of the non-native substrate proteins and provides a physical environment optimized to promote and accelerate protein folding. The chain is Chaperonin GroEL from Desulfatibacillum aliphaticivorans.